Reading from the N-terminus, the 129-residue chain is uncharacterized protein (129 aa).

The chain crosses the membrane as a helical span at residues 8-24 (YLILFITIIAICSLFRI).

Its subcellular location is the membrane. This is an uncharacterized protein from Rickettsia prowazekii (strain Madrid E).